An 801-amino-acid chain; its full sequence is N,N'-diacetylchitobiose phosphorylase (801 aa).

N-acetyl-alpha-D-glucosamine 1-phosphate is bound by residues Arg-333, Arg-343, Arg-349, Asp-350, Trp-490, and Asp-492. Asp-492 acts as the Proton donor in catalysis. Positions 492, 636, and 637 each coordinate N-acetyl-D-glucosamine. N-acetyl-alpha-D-glucosamine 1-phosphate-binding residues include Glu-637, His-644, Gln-690, Thr-709, and Gly-710.

Belongs to the glycosyl hydrolase 94 family. In terms of assembly, homodimer.

The catalysed reaction is N,N'-diacetylchitobiose + phosphate = N-acetyl-alpha-D-glucosamine 1-phosphate + N-acetyl-D-glucosamine. Its function is as follows. Catalyzes the reversible phosphorolysis of chitobiose (N,N'-diacetylchitobiose or (GlcNAc)(2)) into N-acetyl-alpha-D-glucosamine 1-phosphate (GlcNAc-1-P) and N-acetyl-D-glucosamine (GlcNAc) with inversion of the anomeric configuration. In the synthetic reaction, is also active on glucose-1-phosphate with 10% activity as compared with that on GlcNAc-1-P. GlcNAc is the best acceptor substrate, but the enzyme can use aryl-beta-glycosides of GlcNAc as the acceptor substrate with 10-20% activities of GlcNAc. Shows no phosphorolytic activity on cellobiose. The polypeptide is N,N'-diacetylchitobiose phosphorylase (Vibrio proteolyticus (Aeromonas proteolytica)).